The following is a 263-amino-acid chain: Hydroxyethylthiazole kinase (263 aa).

Methionine 41 provides a ligand contact to substrate. The ATP site is built by arginine 117 and serine 163. Alanine 190 serves as a coordination point for substrate.

This sequence belongs to the Thz kinase family. The cofactor is Mg(2+).

The catalysed reaction is 5-(2-hydroxyethyl)-4-methylthiazole + ATP = 4-methyl-5-(2-phosphooxyethyl)-thiazole + ADP + H(+). Its pathway is cofactor biosynthesis; thiamine diphosphate biosynthesis; 4-methyl-5-(2-phosphoethyl)-thiazole from 5-(2-hydroxyethyl)-4-methylthiazole: step 1/1. Its function is as follows. Catalyzes the phosphorylation of the hydroxyl group of 4-methyl-5-beta-hydroxyethylthiazole (THZ). In Haemophilus influenzae (strain PittEE), this protein is Hydroxyethylthiazole kinase.